We begin with the raw amino-acid sequence, 499 residues long: Cytochrome P450 2M1 (499 aa).

Cysteine 441 is a binding site for heme.

The protein belongs to the cytochrome P450 family. Requires heme as cofactor. As to expression, in kidney and in liver from juvenile and sexually mature trout from both sexes.

The protein resides in the endoplasmic reticulum membrane. The protein localises to the microsome membrane. It carries out the reaction an organic molecule + reduced [NADPH--hemoprotein reductase] + O2 = an alcohol + oxidized [NADPH--hemoprotein reductase] + H2O + H(+). Has (omega-6)-hydroxylation activity toward lauric acid. This Oncorhynchus mykiss (Rainbow trout) protein is Cytochrome P450 2M1 (cyp2m1).